Here is a 424-residue protein sequence, read N- to C-terminus: MSDLQGRKVFKVFNQDFIVDERYNVTKELGQGAYGIVCAATNVHTGEGVAIKKVTNVFSKKILAKRALREIKLLQHFRGHRNITCLYDMDIPRPDNFNETYLYEELMECDLAAIIRSGQPLTDAHFQSFIYQILCGLKYIHSANVLHRDLKPGNLLVNADCELKICDFGLARGFSIDPEENAGYMTEYVATRWYRAPEIMLSFQSYTKAIDVWSVGCILAELLGGRPFFKGRDYVDQLNQILHYLGTPNEETLSRIGSPRAQEYVRNLPFMPKIPFQRLFPNANPDALDLLDRMLAFDPASRISVEEALEHPYLHIWHDASDEPTCPTTFDFHFEVVDDVQEMRKMIYDEVVRFRNLVRQQSQAQAAAAAQQQQQQIAQQTNVPIPDHQQGGWKQEEPKPQEVHAAGGHVNDLESSLQRGMDVQ.

In terms of domain architecture, Protein kinase spans 23-314 (YNVTKELGQG…VEEALEHPYL (292 aa)). Residues 29 to 37 (LGQGAYGIV) and Lys-52 contribute to the ATP site. Residues 375–424 (QQIAQQTNVPIPDHQQGGWKQEEPKPQEVHAAGGHVNDLESSLQRGMDVQ) are disordered.

The protein belongs to the protein kinase superfamily. Ser/Thr protein kinase family. Interacts with flbB, flbC, brlA, and rasB. Interacts with fmqA and fmqC. Interacts with hsp90. The cofactor is Mg(2+). In terms of processing, phosphorylated by the upstreamm MAPKK mkk2. Phosphorylation is induced during asexual development. Phosphorylation is regulated by rlmA.

The catalysed reaction is L-seryl-[protein] + ATP = O-phospho-L-seryl-[protein] + ADP + H(+). The enzyme catalyses L-threonyl-[protein] + ATP = O-phospho-L-threonyl-[protein] + ADP + H(+). Its activity is regulated as follows. Activated by threonine and tyrosine phosphorylation by the upstreamm MAPKK mkk2. Its function is as follows. Mitogen-activated protein kinase; part of cell wall integrity (CWI) signaling pathway composed of pkcA, the bck1-mkk2-mpka MAPK cascade and the downstream rlmA transcription regulator. The CWI signaling pathway regulates cell wall integrity and pyomelanin formation. CWI also controls oxidative stress response, gliotoxin production, iron adaptation and asexual development. Finally, CWI is constitutively required for A.fumigatus to cope with the temperature increase found in the mammalian lung environment, during infection. MpkA positively modulates the expression of fumiquinazoline cluster during conidiogenesis and directly phosphorylates fmqC, and perhaps also fmqA. This chain is Mitogen-activated protein kinase mpkA, found in Aspergillus fumigatus (strain ATCC MYA-4609 / CBS 101355 / FGSC A1100 / Af293) (Neosartorya fumigata).